Reading from the N-terminus, the 147-residue chain is Large ribosomal subunit protein uL13 (147 aa).

It belongs to the universal ribosomal protein uL13 family. In terms of assembly, part of the 50S ribosomal subunit.

Its function is as follows. This protein is one of the early assembly proteins of the 50S ribosomal subunit, although it is not seen to bind rRNA by itself. It is important during the early stages of 50S assembly. The sequence is that of Large ribosomal subunit protein uL13 from Renibacterium salmoninarum (strain ATCC 33209 / DSM 20767 / JCM 11484 / NBRC 15589 / NCIMB 2235).